The sequence spans 251 residues: Regulator of G-protein signaling 9-binding protein C (251 aa).

Residues 1–230 (MPLQNVKVAD…NSKGCCSDGQ (230 aa)) are Cytoplasmic-facing. 2 coiled-coil regions span residues 53-94 (LRDE…ELER) and 158-187 (ANKA…MKVN). Residues 231–250 (LIVSLLLCGTALVAITLYSI) traverse the membrane as a helical; Anchor for type IV membrane protein segment. A topological domain (extracellular) is located at residue Leu251.

The protein belongs to the RGS7BP/RGS9BP family.

It is found in the membrane. Its function is as follows. Regulator of G protein-coupled receptor (GPCR) signaling. Probably acts by regulating the activity of some 'R7' family protein (RGS6, RGS7, RGS9 and/or RGS11). The protein is Regulator of G-protein signaling 9-binding protein C (rgs9bp-c) of Xenopus laevis (African clawed frog).